A 359-amino-acid polypeptide reads, in one-letter code: Phosphoserine aminotransferase (359 aa).

Arg41 contributes to the L-glutamate binding site. Residues 75-76 (AS), Trp101, Thr151, Asp171, and Gln194 each bind pyridoxal 5'-phosphate. Position 195 is an N6-(pyridoxal phosphate)lysine (Lys195). Residue 236-237 (NT) participates in pyridoxal 5'-phosphate binding.

Belongs to the class-V pyridoxal-phosphate-dependent aminotransferase family. SerC subfamily. As to quaternary structure, homodimer. Requires pyridoxal 5'-phosphate as cofactor.

The protein localises to the cytoplasm. It carries out the reaction O-phospho-L-serine + 2-oxoglutarate = 3-phosphooxypyruvate + L-glutamate. The catalysed reaction is 4-(phosphooxy)-L-threonine + 2-oxoglutarate = (R)-3-hydroxy-2-oxo-4-phosphooxybutanoate + L-glutamate. Its pathway is amino-acid biosynthesis; L-serine biosynthesis; L-serine from 3-phospho-D-glycerate: step 2/3. It participates in cofactor biosynthesis; pyridoxine 5'-phosphate biosynthesis; pyridoxine 5'-phosphate from D-erythrose 4-phosphate: step 3/5. In terms of biological role, catalyzes the reversible conversion of 3-phosphohydroxypyruvate to phosphoserine and of 3-hydroxy-2-oxo-4-phosphonooxybutanoate to phosphohydroxythreonine. The sequence is that of Phosphoserine aminotransferase from Thiobacillus denitrificans (strain ATCC 25259 / T1).